Consider the following 318-residue polypeptide: Protein-L-histidine N-pros-methyltransferase (318 aa).

An N-terminal signal peptide occupies residues 1–18 (MRLLAGWLCLSLASVWLA). The N-linked (GlcNAc...) asparagine glycan is linked to Asn-35. 3 residues coordinate S-adenosyl-L-homocysteine: Glu-174, Asn-210, and Tyr-295.

This sequence belongs to the METTL9 family. As to expression, expressed in liver, colon, small intestine, skin, kidney and to a lesser extent in spleen, lung, thymus and stomach. Not detected in fibroblast and endothelial cells.

It localises to the endoplasmic reticulum. It is found in the mitochondrion. The catalysed reaction is L-histidyl-[protein] + S-adenosyl-L-methionine = N(pros)-methyl-L-histidyl-[protein] + S-adenosyl-L-homocysteine + H(+). Protein-histidine N-methyltransferase that specifically catalyzes 1-methylhistidine (pros-methylhistidine) methylation of target proteins. Specifically methylates the second His of proteins with a His-x-His (HxH) motif (where 'x' is preferably a small amino acid), while exploiting the first one as a recognition signature. Catalyzes methylation of target proteins such as S100A9, NDUFB3, SLC39A5, SLC39A7, ARMC6 and DNAJB12; 1-methylhistidine modification may affect the binding of zinc and other metals to its target proteins. Constitutes the main methyltransferase for the 1-methylhistidine modification in cell. The chain is Protein-L-histidine N-pros-methyltransferase from Mus musculus (Mouse).